Here is a 177-residue protein sequence, read N- to C-terminus: Translation initiation factor IF-3 (177 aa).

It belongs to the IF-3 family. Monomer.

The protein localises to the cytoplasm. Functionally, IF-3 binds to the 30S ribosomal subunit and shifts the equilibrium between 70S ribosomes and their 50S and 30S subunits in favor of the free subunits, thus enhancing the availability of 30S subunits on which protein synthesis initiation begins. This is Translation initiation factor IF-3 from Nostoc sp. (strain PCC 7120 / SAG 25.82 / UTEX 2576).